Consider the following 288-residue polypeptide: HTH-type transcriptional regulator CzcR (288 aa).

The 58-residue stretch at 1–58 (MELRDLQIFQSVADQGSVSSAAKELNYVQSNVTARIKQLENELKTPLFYRHKRGMTLT) folds into the HTH lysR-type domain. The H-T-H motif DNA-binding region spans 18-37 (VSSAAKELNYVQSNVTARIK).

This sequence belongs to the LysR transcriptional regulatory family.

The protein is HTH-type transcriptional regulator CzcR (czcR) of Bacillus anthracis.